Here is a 298-residue protein sequence, read N- to C-terminus: uncharacterized protein (298 aa).

Residues 2–229 (LTIDHVTKTF…FGKKNVTIHS (228 aa)) enclose the ABC transporter domain. 34–41 (GANGAGKT) is an ATP binding site.

This sequence belongs to the ABC transporter superfamily.

The protein localises to the cell membrane. This is an uncharacterized protein from Bacillus subtilis (strain 168).